Here is a 949-residue protein sequence, read N- to C-terminus: MTWKMGPHFTMLLAMWLVCGSASQSSALDSDGRPGRKVPLASPISSRSARYLRHTGRSGGVEKSTQEEPNPQSFQRRKSVPVLRLAHPTVRPPPSGINGAPVRPELKPIARGSASEMVRDEGSSARTRMLRFPSGSSSPNILASFAGKNRVWVISAPHASEGYYRLMMSLLKDDVYCELAERHIQQIVLFHQAGEEGGKVRRITSEGQILEQPLDPNLIPKLMSFLKLEKGKFSMVLLKKTLQVEERYPYPVRLEAMYEVIDQGPIRRIEKIRQKGFVQKCKASGIEGHVVQEGNNGGGGGGSTGLGSDKRKEDPRRTQIHPTREPPRKQTTTKAATPQPPPTPRATTLPPAPVTTATRATSRVVTVAARPTTTTAYPATQRPWTSRLHPFSVSHRPPATAEMTTVRGPSVSEQLYPLPRKEQQREKPQATRRPNKATNYGSFTATPPTTLWEGSTRAVGTSRFRDNRTDKREHGHQDPNVVPGPHKPIKGKLPKKKEKILSNEYEAKYDLSRPTTSQGEEELQVDNIPSQNAKESKKHEKPEKPEKEKKKKGKSAKPDKLLRSEKQMKKAEKKSKQEKEKTKKKKAGKTEQDDYQKPTAKHLAPSPRKSVADLLGSFEGKRRLLLITTPKAENNMYVQQRDEYLESFCKMATRRISVVTIFGPVNNSSMKIDHFQLDNEKPMRVVDDEDLVDQHLISELRKEYGMTYNDFFMVLTDVDLRVKQYYEVPIAMKSVFDLIDTFQSRIKDMEKQKKEGITCKEDKRQSLENFLSRFRWRRRLLVISAPNDEDWAYSQQLSALNGQACNFGLRHITILKLLGVGEEVGGILELFPINGSSTVEREDVPAHLVKDIRNYFQVSPEYFSMLLVGKDGNVKSWYPSPMWSMVIVYDLIDSMQLRRQEMAIQQSLGMRCPEDEYAGYGYHSYHQGYQDGYQDDYRHHESYHHGYPY.

Positions 1 to 27 are cleaved as a signal peptide; sequence MTWKMGPHFTMLLAMWLVCGSASQSSA. 3 disordered regions span residues 24 to 79, 289 to 360, and 408 to 609; these read QSSA…RRKS, HVVQ…ATRA, and GPSV…SPRK. Gly residues predominate over residues 295 to 305; sequence NNGGGGGGSTG. The span at 308-328 shows a compositional bias: basic and acidic residues; the sequence is SDKRKEDPRRTQIHPTREPPR. Residues 345-360 are compositionally biased toward low complexity; sequence RATTLPPAPVTTATRA. Basic and acidic residues predominate over residues 419–429; sequence PRKEQQREKPQ. A compositionally biased stretch (polar residues) spans 436–453; it reads KATNYGSFTATPPTTLWE. The span at 463–477 shows a compositional bias: basic and acidic residues; it reads RFRDNRTDKREHGHQ. Asn-467 carries N-linked (GlcNAc...) asparagine glycosylation. Residues 487-498 are compositionally biased toward basic residues; it reads KPIKGKLPKKKE. Basic and acidic residues-rich tracts occupy residues 499–511, 534–548, and 556–581; these read KILS…KYDL, KESK…PEKE, and AKPD…EKEK. Glycyl lysine isopeptide (Lys-Gly) (interchain with G-Cter in SUMO2) cross-links involve residues Lys-544 and Lys-547. Positions 559-587 form a coiled coil; the sequence is DKLLRSEKQMKKAEKKSKQEKEKTKKKKA.

Belongs to the CCDC80 family. Binds to various extracellular matrix proteins. Phosphorylated. As to expression, isoform 2 is expressed in uterus, liver, lung, spleen, kidney, heart, bladder, skeletal muscle and brain (at protein level). Isoform 2 is expressed very low in mammary gland and intestine (at protein level). Isoform 2 is expressed in lactating mammary glands and mammary tumors (at protein level). Ubiquitous (isoform 1). Isoform 2 is expressed in ovary, uterus, mammary glands, liver, lung, spleen, kidney, heart, bladder, intestine, skeletal muscle and brain.

Its subcellular location is the secreted. It is found in the extracellular space. It localises to the extracellular matrix. In terms of biological role, promotes cell adhesion and matrix assembly. The sequence is that of Coiled-coil domain-containing protein 80 (Ccdc80) from Rattus norvegicus (Rat).